Here is a 1035-residue protein sequence, read N- to C-terminus: Putative protein FAM47C (1035 aa).

2 disordered regions span residues 1-21 and 159-797; these read MGDQ…TPWY and LEDA…RRVS. Basic and acidic residues predominate over residues 159–173; that stretch reads LEDAGSCEGQEKTTD. Pro residues predominate over residues 380 to 392; that stretch reads PEPPKTRVPPLRP. The span at 478-490 shows a compositional bias: basic and acidic residues; sequence PPEKDVSHLRPEP. A compositionally biased stretch (polar residues) spans 533–544; that stretch reads SLHQAPPESSVS. Composition is skewed to basic and acidic residues over residues 611 to 622, 683 to 694, and 753 to 766; these read PETRVSHLRPEP and EPLE…RPEP.

Belongs to the FAM47 family.

The polypeptide is Putative protein FAM47C (FAM47C) (Homo sapiens (Human)).